The primary structure comprises 94 residues: Co-chaperonin GroES (94 aa).

The protein belongs to the GroES chaperonin family. Heptamer of 7 subunits arranged in a ring. Interacts with the chaperonin GroEL.

The protein localises to the cytoplasm. Together with the chaperonin GroEL, plays an essential role in assisting protein folding. The GroEL-GroES system forms a nano-cage that allows encapsulation of the non-native substrate proteins and provides a physical environment optimized to promote and accelerate protein folding. GroES binds to the apical surface of the GroEL ring, thereby capping the opening of the GroEL channel. The chain is Co-chaperonin GroES from Latilactobacillus sakei subsp. sakei (strain 23K) (Lactobacillus sakei subsp. sakei).